A 150-amino-acid chain; its full sequence is Large-conductance mechanosensitive channel (150 aa).

2 helical membrane passes run 14 to 34 and 81 to 101; these read VIDLAIGIIIGAAFGKIVTSF and GVFLNSIIDFIIVAVAIFLVV.

The protein belongs to the MscL family. As to quaternary structure, homopentamer.

It localises to the cell membrane. Its function is as follows. Channel that opens in response to stretch forces in the membrane lipid bilayer. May participate in the regulation of osmotic pressure changes within the cell. In Syntrophomonas wolfei subsp. wolfei (strain DSM 2245B / Goettingen), this protein is Large-conductance mechanosensitive channel.